Reading from the N-terminus, the 122-residue chain is Glycine cleavage system H protein (122 aa).

A Lipoyl-binding domain is found at 19–101 (VATVGITDYA…QGKAWFFKIK (83 aa)). K60 is subject to N6-lipoyllysine.

The protein belongs to the GcvH family. The glycine cleavage system is composed of four proteins: P, T, L and H. (R)-lipoate serves as cofactor.

Its function is as follows. The glycine cleavage system catalyzes the degradation of glycine. The H protein shuttles the methylamine group of glycine from the P protein to the T protein. The sequence is that of Glycine cleavage system H protein from Bradyrhizobium diazoefficiens (strain JCM 10833 / BCRC 13528 / IAM 13628 / NBRC 14792 / USDA 110).